The sequence spans 319 residues: Phospho-N-acetylmuramoyl-pentapeptide-transferase (319 aa).

Helical transmembrane passes span 5–25, 51–71, 79–99, 119–139, 149–169, 173–193, 197–217, 224–246, and 299–319; these read LIAF…LIIW, TMGG…ICAY, VWIL…DDGL, LLVA…FALY, VVLF…AVNL, LDGL…WLAF, NFGV…FFMF, IFMG…IFLG, and VDLV…MIWG.

Belongs to the glycosyltransferase 4 family. MraY subfamily. Mg(2+) serves as cofactor.

It is found in the cell membrane. It carries out the reaction UDP-N-acetyl-alpha-D-muramoyl-L-alanyl-gamma-D-glutamyl-L-lysyl-D-alanyl-D-alanine + di-trans,octa-cis-undecaprenyl phosphate = Mur2Ac(oyl-L-Ala-gamma-D-Glu-L-Lys-D-Ala-D-Ala)-di-trans,octa-cis-undecaprenyl diphosphate + UMP. The protein operates within cell wall biogenesis; peptidoglycan biosynthesis. In terms of biological role, catalyzes the initial step of the lipid cycle reactions in the biosynthesis of the cell wall peptidoglycan: transfers peptidoglycan precursor phospho-MurNAc-pentapeptide from UDP-MurNAc-pentapeptide onto the lipid carrier undecaprenyl phosphate, yielding undecaprenyl-pyrophosphoryl-MurNAc-pentapeptide, known as lipid I. The sequence is that of Phospho-N-acetylmuramoyl-pentapeptide-transferase from Lactobacillus delbrueckii subsp. bulgaricus (strain ATCC BAA-365 / Lb-18).